We begin with the raw amino-acid sequence, 1040 residues long: Regulator of telomere elongation helicase 1 homolog (1040 aa).

In terms of domain architecture, Helicase ATP-binding spans 52-355 (RGINVEFPFE…KGLLLKLQEL (304 aa)). Residue 87–94 (SPTGTGKT) participates in ATP binding. A disordered region spans residues 117-137 (RKNSAIPWSDSDEPLSQSGGG). [4Fe-4S] cluster is bound by residues C181, C202, C210, and C246. The DEAH box motif lies at 289–292 (DEAH). The disordered stretch occupies residues 926–949 (KVPESQGSASSSVLTAKGNGGGDK). Positions 930–939 (SQGSASSSVL) are enriched in polar residues. The PIP-box; degenerate motif lies at 992–999 (QSIVQLFC).

It belongs to the helicase family. RAD3/XPD subfamily.

Its subcellular location is the nucleus. It carries out the reaction ATP + H2O = ADP + phosphate + H(+). Functionally, a probable ATP-dependent DNA helicase implicated in DNA replication, DNA repair and the maintenance of genomic stability. Acts as an anti-recombinase to counteract toxic recombination and limit crossover during meiosis. Regulates meiotic recombination and crossover homeostasis by physically dissociating strand invasion events and thereby promotes noncrossover repair by meiotic synthesis dependent strand annealing (SDSA) as well as disassembly of D loop recombination intermediates. Also plays a role in preserving the stability of 45S rDNA repeats. The sequence is that of Regulator of telomere elongation helicase 1 homolog from Arabidopsis thaliana (Mouse-ear cress).